The primary structure comprises 631 residues: Mitochondrial Rho GTPase (631 aa).

Residues 1–605 lie on the Cytoplasmic side of the membrane; it reads MRAGRVRPLR…TQADLKSSTF (605 aa). A Miro 1 domain is found at 15-181; that stretch reads KKDVRILLVG…FYYAQKAVLH (167 aa). The GTP site is built by Arg27, Gly29, Lys30, Thr31, and Ser32. Thr31 lines the Mg(2+) pocket. Residue Asp70 coordinates Mg(2+). Ser72 lines the GTP pocket. Lys105 is modified (N6-acetyllysine). GTP-binding residues include Asn131, Lys132, Asp134, Ala162, and Lys163. Residue Lys166 forms a Glycyl lysine isopeptide (Lys-Gly) (interchain with G-Cter in ubiquitin) linkage. The EF-hand 1 domain maps to 197 to 232; the sequence is ACIKALTRIFKISDQDNDGTLNDAELNFFQRICFNT. Positions 210, 212, 214, 216, and 221 each coordinate Ca(2+). Lys248 is covalently cross-linked (Glycyl lysine isopeptide (Lys-Gly) (interchain with G-Cter in ubiquitin)). One can recognise an EF-hand 2 domain in the interval 317–352; the sequence is HAYLFLQSTFDKHDLDRDCALSPDELKDLFQVFPYI. Asp330, Asp332, Asp334, Ala336, and Glu341 together coordinate Ca(2+). A Miro 2 domain is found at 429-592; that stretch reads RNVFRCNVIG…FVKLTTMAMY (164 aa). Residues Gly441, Cys442, Gly443, Lys444, Thr445, Gly446, Lys460, Lys541, Asp543, Thr571, and Cys572 each coordinate GTP. A Mg(2+)-binding site is contributed by Gly441. A Glycyl lysine isopeptide (Lys-Gly) (interchain with G-Cter in ubiquitin) cross-link involves residue Lys585. The helical; Anchor for type IV membrane protein transmembrane segment at 606–628 threads the bilayer; sequence WLRASFGATVFAVVGFAMYRALL. At 629–631 the chain is on the mitochondrial intermembrane side; sequence KQR.

Belongs to the mitochondrial Rho GTPase family. As to quaternary structure, homodimer. Interacts with the kinesin-binding proteins TRAK1/OIP106 and TRAK2/GRIF1, forming a link between mitochondria and the trafficking apparatus of the microtubules. Interacts with RAP1GDS1. Interacts with ARMCX1. Found in a complex with KIF5B, OGT, RHOT2 and TRAK1. In terms of processing, ubiquitinated by PRKN during mitophagy, leading to its degradation and enhancement of mitophagy. Deubiquitinated by USP30. Acetylation on Lys-105 decreases sensitivity of mitochondrial transport to elevated Ca(2+) levels, increases mitochondrial transport and promotes axon growth. Deacetylated by HDAC6 which blocks mitochondrial transport and mediates axon growth inhibition.

It localises to the mitochondrion outer membrane. The enzyme catalyses GTP + H2O = GDP + phosphate + H(+). The catalysed reaction is ATP + H2O = ADP + phosphate + H(+). It catalyses the reaction UTP + H2O = UDP + phosphate + H(+). In terms of biological role, atypical mitochondrial nucleoside-triphosphatase (NTPase) involved in mitochondrial trafficking. Probably involved in control of anterograde transport of mitochondria and their subcellular distribution. Promotes mitochondrial fission during high calcium conditions. Can hydrolyze GTP, ATP and UTP. This Rattus norvegicus (Rat) protein is Mitochondrial Rho GTPase.